Here is a 132-residue protein sequence, read N- to C-terminus: Mercuric resistance operon regulatory protein (132 aa).

The region spanning Lys2–Val71 is the HTH merR-type domain. A DNA-binding region (H-T-H motif) is located at residues Ile5 to Arg24. Hg(2+)-binding residues include Cys79, Cys114, and Cys123.

Homodimer.

Its function is as follows. Mediates the mercuric-dependent induction of mercury resistance operon. In the absence of mercury MerR represses transcription by binding tightly to the mer operator region; when mercury is present the dimeric complex binds a single ion and becomes a potent transcriptional activator, while remaining bound to the mer site. The polypeptide is Mercuric resistance operon regulatory protein (merR1) (Bacillus cereus).